The primary structure comprises 349 residues: Ferredoxin--NADP reductase 3 (349 aa).

Positions 34, 42, 46, 86, 120, 287, and 328 each coordinate FAD.

The protein belongs to the ferredoxin--NADP reductase type 2 family. Homodimer. FAD is required as a cofactor.

It carries out the reaction 2 reduced [2Fe-2S]-[ferredoxin] + NADP(+) + H(+) = 2 oxidized [2Fe-2S]-[ferredoxin] + NADPH. The polypeptide is Ferredoxin--NADP reductase 3 (Lysinibacillus sphaericus (strain C3-41)).